The sequence spans 90 residues: Large ribosomal subunit protein bL27 (90 aa).

Residues methionine 1 to glycine 22 are disordered.

This sequence belongs to the bacterial ribosomal protein bL27 family.

The polypeptide is Large ribosomal subunit protein bL27 (Coxiella burnetii (strain Dugway 5J108-111)).